The chain runs to 455 residues: Chromosomal replication initiator protein DnaA 2 (455 aa).

The interval 1 to 95 (MLTCNDCSTW…KRSSPQIAAS (95 aa)) is domain I, interacts with DnaA modulators. Residues 96-112 (VTKPAVEVSEENKDFQL) form a domain II region. Residues 113–328 (KLNGAYRFDN…GAINKLTAYC (216 aa)) are domain III, AAA+ region. 4 residues coordinate ATP: glycine 157, glycine 159, lysine 160, and threonine 161. Residues 329-455 (LLFNKPLTET…IAIDSPQHFV (127 aa)) are domain IV, binds dsDNA.

Belongs to the DnaA family. As to quaternary structure, oligomerizes as a right-handed, spiral filament on DNA at oriC.

The protein localises to the cytoplasm. In terms of biological role, plays an essential role in the initiation and regulation of chromosomal replication. ATP-DnaA binds to the origin of replication (oriC) to initiate formation of the DNA replication initiation complex once per cell cycle. Binds the DnaA box (a 9 base pair repeat at the origin) and separates the double-stranded (ds)DNA. Forms a right-handed helical filament on oriC DNA; dsDNA binds to the exterior of the filament while single-stranded (ss)DNA is stabiized in the filament's interior. The ATP-DnaA-oriC complex binds and stabilizes one strand of the AT-rich DNA unwinding element (DUE), permitting loading of DNA polymerase. After initiation quickly degrades to an ADP-DnaA complex that is not apt for DNA replication. Binds acidic phospholipids. The sequence is that of Chromosomal replication initiator protein DnaA 2 from Chlamydia muridarum (strain MoPn / Nigg).